We begin with the raw amino-acid sequence, 245 residues long: Probable phosphatase YPTB2019 (245 aa).

Zn(2+) is bound by residues H7, H9, H15, H40, E73, H101, H131, D192, and H194.

This sequence belongs to the PHP family. Homotrimer. Requires Zn(2+) as cofactor.

This Yersinia pseudotuberculosis serotype I (strain IP32953) protein is Probable phosphatase YPTB2019.